The following is a 45-amino-acid chain: Cytochrome c6 (45 aa).

Heme c is bound by residues Cys12, Cys15, and His16.

This sequence belongs to the cytochrome c family. PetJ subfamily. In terms of assembly, monomer. In terms of processing, binds 1 heme c group covalently per subunit.

Its subcellular location is the cellular thylakoid lumen. In terms of biological role, functions as an electron carrier between membrane-bound cytochrome b6-f and photosystem I in oxygenic photosynthesis. In Prochlorothrix hollandica, this protein is Cytochrome c6 (petJ).